The chain runs to 120 residues: Glycine cleavage system H protein (120 aa).

The Lipoyl-binding domain occupies 17–99 (VATVGITNYA…QGAGWFFKLK (83 aa)). Lys58 is modified (N6-lipoyllysine).

It belongs to the GcvH family. In terms of assembly, the glycine cleavage system is composed of four proteins: P, T, L and H. Requires (R)-lipoate as cofactor.

Functionally, the glycine cleavage system catalyzes the degradation of glycine. The H protein shuttles the methylamine group of glycine from the P protein to the T protein. In Rhizobium leguminosarum bv. trifolii (strain WSM2304), this protein is Glycine cleavage system H protein.